Consider the following 283-residue polypeptide: 4-hydroxy-tetrahydrodipicolinate synthase (283 aa).

Thr-46 contacts pyruvate. The Proton donor/acceptor role is filled by Tyr-134. Lys-162 functions as the Schiff-base intermediate with substrate in the catalytic mechanism. Pyruvate is bound at residue Ile-208.

The protein belongs to the DapA family. Homotetramer; dimer of dimers.

The protein localises to the cytoplasm. The catalysed reaction is L-aspartate 4-semialdehyde + pyruvate = (2S,4S)-4-hydroxy-2,3,4,5-tetrahydrodipicolinate + H2O + H(+). It participates in amino-acid biosynthesis; L-lysine biosynthesis via DAP pathway; (S)-tetrahydrodipicolinate from L-aspartate: step 3/4. Its function is as follows. Catalyzes the condensation of (S)-aspartate-beta-semialdehyde [(S)-ASA] and pyruvate to 4-hydroxy-tetrahydrodipicolinate (HTPA). The polypeptide is 4-hydroxy-tetrahydrodipicolinate synthase (Methanothermobacter thermautotrophicus (strain ATCC 29096 / DSM 1053 / JCM 10044 / NBRC 100330 / Delta H) (Methanobacterium thermoautotrophicum)).